Here is a 441-residue protein sequence, read N- to C-terminus: Histone-lysine N-methyltransferase set9 (441 aa).

In terms of domain architecture, SET spans 108–221; that stretch reads CKFEICSTNQ…PGEEITTFYS (114 aa).

This sequence belongs to the class V-like SAM-binding methyltransferase superfamily. Histone-lysine methyltransferase family. Suvar4-20 subfamily.

Its subcellular location is the nucleus. The protein resides in the chromosome. It carries out the reaction L-lysyl(20)-[histone H4] + 3 S-adenosyl-L-methionine = N(6),N(6),N(6)-trimethyl-L-lysyl(20)-[histone H4] + 3 S-adenosyl-L-homocysteine + 3 H(+). Histone methyltransferase that specifically trimethylates 'Lys-20' of histone H4 to form H4K20me3. H4 'Lys-20' methylation is apparently not involved in the regulation of gene expression or heterochromatin function but participates in DNA damage response by giving a 'histone mark' required for the recruitment of the checkpoint protein Crb2 to sites of DNA damage. The protein is Histone-lysine N-methyltransferase set9 (set9) of Schizosaccharomyces pombe (strain 972 / ATCC 24843) (Fission yeast).